The following is a 231-amino-acid chain: 2-C-methyl-D-erythritol 4-phosphate cytidylyltransferase (231 aa).

This sequence belongs to the IspD/TarI cytidylyltransferase family. IspD subfamily.

It catalyses the reaction 2-C-methyl-D-erythritol 4-phosphate + CTP + H(+) = 4-CDP-2-C-methyl-D-erythritol + diphosphate. It functions in the pathway isoprenoid biosynthesis; isopentenyl diphosphate biosynthesis via DXP pathway; isopentenyl diphosphate from 1-deoxy-D-xylulose 5-phosphate: step 2/6. Catalyzes the formation of 4-diphosphocytidyl-2-C-methyl-D-erythritol from CTP and 2-C-methyl-D-erythritol 4-phosphate (MEP). The protein is 2-C-methyl-D-erythritol 4-phosphate cytidylyltransferase of Lysinibacillus sphaericus (strain C3-41).